Reading from the N-terminus, the 445-residue chain is MNFRELDTSNGVKAAESSFRTKVVLAREIPWNGFASSNSITSEQYNLISKYDKHTDAEKKEKFAANSASYVNFFVNFINSTSNIEIIQYLLTLINEIIEIDPRAAGAFSKITKDDDKSYPYSVFFRLLNREDAYTNLHASIALAQIMCAGKPTQNDVESFFNWILKLLRKNNSSEVEVGLIALQSLLLKDDFRIFFNNIDGSALLLNILQALSTSSVNIQLLYETIYAIWLLTYNKDIAAAYSGTGLVANLVQLVKTVAKEKIVRLSLSTLRNLLNNGKSNEEMIDNGFVRMLNILNIKKWGDDDIPADIEVLINGLAKDIDNMSSFNKYKTEIISGELEWTPVHKSERFWKENISKFEENNYQVIKHLHQILKTSQSTPLQLSIACHDLCEFVRHHSRGKAIMTITNQTRYHGYDVKSNEEVKNQALFALQKMMLNNWEYLNAK.

It belongs to the V-ATPase H subunit family. In terms of assembly, V-ATPase is a heteromultimeric enzyme composed of a peripheral catalytic V1 complex (components A to H) attached to an integral membrane V0 proton pore complex (components: a, c, c', c'' and d).

Its function is as follows. Subunit of the peripheral V1 complex of vacuolar ATPase. Subunit H activates the ATPase activity of the enzyme and couples ATPase activity to proton flow. Vacuolar ATPase is responsible for acidifying a variety of intracellular compartments in eukaryotic cells, thus providing most of the energy required for transport processes in the vacuolar system. The polypeptide is V-type proton ATPase subunit H (vatH) (Dictyostelium discoideum (Social amoeba)).